Here is a 90-residue protein sequence, read N- to C-terminus: Putative UPF0401 protein YpjI (90 aa).

This sequence belongs to the UPF0401 family.

This is Putative UPF0401 protein YpjI (ypjI) from Escherichia coli (strain K12).